A 361-amino-acid polypeptide reads, in one-letter code: Probable dual-specificity RNA methyltransferase RlmN (361 aa).

The active-site Proton acceptor is the Glu104. In terms of domain architecture, Radical SAM core spans His110–Asp343. A disulfide bridge links Cys117 with Cys348. Residues Cys124, Cys128, and Cys131 each coordinate [4Fe-4S] cluster. S-adenosyl-L-methionine contacts are provided by residues Gly174–Glu175, Ser206, Ser229–His231, and Asn305. The S-methylcysteine intermediate role is filled by Cys348.

The protein belongs to the radical SAM superfamily. RlmN family. Requires [4Fe-4S] cluster as cofactor.

The protein resides in the cytoplasm. It catalyses the reaction adenosine(2503) in 23S rRNA + 2 reduced [2Fe-2S]-[ferredoxin] + 2 S-adenosyl-L-methionine = 2-methyladenosine(2503) in 23S rRNA + 5'-deoxyadenosine + L-methionine + 2 oxidized [2Fe-2S]-[ferredoxin] + S-adenosyl-L-homocysteine. It carries out the reaction adenosine(37) in tRNA + 2 reduced [2Fe-2S]-[ferredoxin] + 2 S-adenosyl-L-methionine = 2-methyladenosine(37) in tRNA + 5'-deoxyadenosine + L-methionine + 2 oxidized [2Fe-2S]-[ferredoxin] + S-adenosyl-L-homocysteine. Its function is as follows. Specifically methylates position 2 of adenine 2503 in 23S rRNA and position 2 of adenine 37 in tRNAs. In Bacillus licheniformis (strain ATCC 14580 / DSM 13 / JCM 2505 / CCUG 7422 / NBRC 12200 / NCIMB 9375 / NCTC 10341 / NRRL NRS-1264 / Gibson 46), this protein is Probable dual-specificity RNA methyltransferase RlmN.